Reading from the N-terminus, the 155-residue chain is Protein E6 (155 aa).

2 zinc fingers span residues 33-69 (CVYCKKELTSLELYRFACIELKLVYRNNWPYAVCRVC) and 106-142 (CYRCQCPLTPEEKQLHCEHKRRFHYIAYAWTGSCLQC).

This sequence belongs to the papillomaviridae E6 protein family. As to quaternary structure, forms homodimers. Interacts with ubiquitin-protein ligase UBE3A/E6-AP; this interaction stimulates UBE3A ubiquitin activity. Interacts with host TP53 and EP300; this interaction inhibits TP53 activity.

Its subcellular location is the host cytoplasm. It localises to the host nucleus. In terms of biological role, plays a major role in the induction and maintenance of cellular transformation. E6 associates with host UBE3A/E6-AP ubiquitin-protein ligase and modulates its activity. Sequesters tumor suppressor TP53 in the host cytoplasm and modulates its activity by interacting with host EP300 that results in the reduction of TP53 acetylation and activation. In turn, apoptosis induced by DNA damage is inhibited. E6 also protects host keratinocytes from apoptosis by mediating the degradation of host BAK1. May also inhibit host immune response. The protein is Protein E6 of Homo sapiens (Human).